Here is a 666-residue protein sequence, read N- to C-terminus: Polyamine deacetylase HDAC10 (666 aa).

The tract at residues methionine 1–glycine 323 is histone deacetylase. Histidine 135 is a catalytic residue.

Belongs to the histone deacetylase family. HD type 2 subfamily. Interacts with HDAC3. Interacts with HDAC2 and NCOR2/SMRT. Interacts with HSPA8/HSC70. Interacts with MSH2. In terms of tissue distribution, widely expressed.

The protein resides in the cytoplasm. Its subcellular location is the nucleus. It carries out the reaction N(8)-acetylspermidine + H2O = spermidine + acetate. It catalyses the reaction N-acetylputrescine + H2O = putrescine + acetate. The catalysed reaction is N-acetylcadaverine + H2O = cadaverine + acetate. The enzyme catalyses N(6)-acetyl-L-lysyl-[protein] + H2O = L-lysyl-[protein] + acetate. Its function is as follows. Polyamine deacetylase (PDAC), which acts preferentially on N(8)-acetylspermidine, and also on acetylcadaverine and acetylputrescine. Exhibits attenuated catalytic activity toward N(1),N(8)-diacetylspermidine and very low activity, if any, toward N(1)-acetylspermidine. Histone deacetylase activity has been observed in vitro. Has also been shown to be involved in MSH2 deacetylation. The physiological relevance of protein/histone deacetylase activity is unclear and could be very weak. May play a role in the promotion of late stages of autophagy, possibly autophagosome-lysosome fusion and/or lysosomal exocytosis in neuroblastoma cells. May play a role in homologous recombination. May promote DNA mismatch repair. This Mus musculus (Mouse) protein is Polyamine deacetylase HDAC10 (Hdac10).